A 291-amino-acid chain; its full sequence is MPELPEVETVRRGLESVVTDAKIVSVQLNRRDLRFPFPEAFSERLIGRKILELGRRAKYLLFHLSQDETILSHLGMSGSWRIENDLLRTAFSMTSKLVKHDHFIMDIQTRNGDVYHLIYNDVRRFGFMLLVDTDKLYKHPLLNKLGLEPMSHGFSGRYLQKAFVNKKVSLKGVLLDQSIVAGLGNIYVCEALWRSRLSPQRGAFTLASKTVYARELANSLAQNIRNVISEAILSGGSSLRDYMHVDGSLGYFQHAFSVYGREGKECLQCGTPIIRILQSGRSSFYCSQCQK.

Catalysis depends on Pro2, which acts as the Schiff-base intermediate with DNA. Residue Glu3 is the Proton donor of the active site. The active-site Proton donor; for beta-elimination activity is Lys58. Positions 100, 123, and 166 each coordinate DNA. Residues Ser257 to Lys291 form an FPG-type zinc finger. Residue Arg281 is the Proton donor; for delta-elimination activity of the active site.

This sequence belongs to the FPG family. In terms of assembly, monomer. The cofactor is Zn(2+).

It catalyses the reaction Hydrolysis of DNA containing ring-opened 7-methylguanine residues, releasing 2,6-diamino-4-hydroxy-5-(N-methyl)formamidopyrimidine.. The enzyme catalyses 2'-deoxyribonucleotide-(2'-deoxyribose 5'-phosphate)-2'-deoxyribonucleotide-DNA = a 3'-end 2'-deoxyribonucleotide-(2,3-dehydro-2,3-deoxyribose 5'-phosphate)-DNA + a 5'-end 5'-phospho-2'-deoxyribonucleoside-DNA + H(+). In terms of biological role, involved in base excision repair of DNA damaged by oxidation or by mutagenic agents. Acts as a DNA glycosylase that recognizes and removes damaged bases. Has a preference for oxidized purines, such as 7,8-dihydro-8-oxoguanine (8-oxoG). Has AP (apurinic/apyrimidinic) lyase activity and introduces nicks in the DNA strand. Cleaves the DNA backbone by beta-delta elimination to generate a single-strand break at the site of the removed base with both 3'- and 5'-phosphates. The polypeptide is Formamidopyrimidine-DNA glycosylase (Bartonella tribocorum (strain CIP 105476 / IBS 506)).